Here is a 315-residue protein sequence, read N- to C-terminus: Putative HTH-type transcriptional regulatory protein PF1851 (315 aa).

The region spanning 131-189 (LRELREKYGYSTTELAEMLGVSRKSVQRYEKGEGMVSIDVAIRLEEIFDEPLVKPIDIF) is the HTH cro/C1-type domain. The H-T-H motif DNA-binding region spans 142-161 (TTELAEMLGVSRKSVQRYEK).

The sequence is that of Putative HTH-type transcriptional regulatory protein PF1851 from Pyrococcus furiosus (strain ATCC 43587 / DSM 3638 / JCM 8422 / Vc1).